The following is a 670-amino-acid chain: MGESNEDIDQMFSTLLGEMDLLTQSLGVDTLPPPDPNPPREEFNYTVGFKDLNESLNALEDQDLDALMADLVADISEAEQRTIQAQKESSQNQDRFALLRASDGQGTASGGYGASAAAIDVSHHEEALPPPPVEPMLDLLPPPPPPPPPELLSKEEEEAKAKADKIKLALEKLKEAKVKKLVVKVHMDDSSTKSLMVDERQLARDVLDNLFEKTHCDCNVDWCLYEIYPELQIERVFEDHENVVEVLSDWTRDTENKVLFLEKEERYAVFKNPQNFYLDNKGKKENKETNEKMNAKNKEYLLEESFCGTSIIVPELEGALYLKEDGKKSWKRRYFLLRASGIYYVPKGKTKTSRDLACFIQFENVNIYYGIQCKMKYKAPTDHCFVLKHPQIQKESQYIKYLCCDDARTLSQWVMGIRIAKYGKTLYDNYQRAVARAGLASRWTNLGTVGTPMPAQPSTVSSGLKTGTSQPNGQMPQAIPSAGPPLQEAQTQIETTKDEKQGLGNHSPGATRENHRPKSSLPPPPPPVRRSSDTCGSPALPSKVKGPGTCTFPHPPENFLPPPPPPPPEEDNSGLLPPPPPPPYLEEPPDFVPPPPPPAAVEDSALPPPPPPPPCLSQEITKSSPLPPKKPLVPPKRQENQGLPGAPGNSEQDFMSDLMKALQKKRGNIP.

The residue at position 55 (S55) is a Phosphoserine. The 88-residue stretch at 179 to 266 (KKLVVKVHMD…KVLFLEKEER (88 aa)) folds into the Ras-associating domain. In terms of domain architecture, PH spans 313–422 (VPELEGALYL…WVMGIRIAKY (110 aa)). Residues 449–653 (VGTPMPAQPS…PGAPGNSEQD (205 aa)) form a disordered region. Residues 456 to 475 (QPSTVSSGLKTGTSQPNGQM) show a composition bias toward polar residues. A Phosphoserine modification is found at S532. A Phosphothreonine modification is found at T534. S537 bears the Phosphoserine mark. Composition is skewed to pro residues over residues 553–567 (PHPP…PPPP), 576–599 (LPPP…PPPA), 606–615 (LPPPPPPPPC), and 625–634 (PLPPKKPLVP).

It belongs to the MRL family. Interacts, through the N-terminal Pro-rich region, with the WW domain of APBB1. Interacts with RAP1A, PFN1, VASP and ENAH. Ubiquitously expressed with high expression in the hematopoietic system.

It is found in the cell membrane. It localises to the cell projection. The protein resides in the lamellipodium. Its subcellular location is the cell junction. The protein localises to the focal adhesion. It is found in the cytoplasm. It localises to the cytoskeleton. Appears to function in the signal transduction from Ras activation to actin cytoskeletal remodeling. Suppresses insulin-induced promoter activities through AP1 and SRE. Mediates Rap1-induced adhesion. In Mus musculus (Mouse), this protein is Amyloid beta A4 precursor protein-binding family B member 1-interacting protein (Apbb1ip).